The primary structure comprises 646 residues: Sulfate transporter 3.2 (646 aa).

The Cytoplasmic segment spans residues 1–76; that stretch reads MSSKRASQYH…GYSLEYLKSD (76 aa). A helical transmembrane segment spans residues 77–97; that stretch reads VISGITIASLAIPQGISYAQL. The Extracellular portion of the chain corresponds to 98–99; it reads AN. Residues 100–120 traverse the membrane as a helical segment; the sequence is LPPILGLYSSLVPPLVYAIMG. At 121–124 the chain is on the cytoplasmic side; the sequence is SSRD. The helical transmembrane segment at 125 to 145 threads the bilayer; sequence LAVGTVAVASLLTAAMLGKEV. Residues 146–154 lie on the Extracellular side of the membrane; that stretch reads NAVVNPKLY. A helical transmembrane segment spans residues 155–175; sequence LHLAFTATFFAGLMQTCLGLL. Position 176 (Arg-176) is a topological domain, cytoplasmic. Residues 177-197 form a helical membrane-spanning segment; that stretch reads LGFVVEILSHAAIVGFMGGAA. At 198-235 the chain is on the extracellular side; the sequence is TVVCLQQLKGLLGLHHFTHSTDIVTVLRSIFSQSHMWR. Residues 236-256 form a helical membrane-spanning segment; that stretch reads WESGVLGCCFLIFLLTTKYIS. Over 257–262 the chain is Cytoplasmic; the sequence is KKRPKL. The helical transmembrane segment at 263 to 283 threads the bilayer; it reads FWISAMSPLVSVIFGTIFLYF. Topologically, residues 284-315 are extracellular; it reads LHDQFHGIQFIGELKKGINPPSITHLVFTPPY. A helical transmembrane segment spans residues 316-336; sequence VMLALKVGIITGVIALAEGIA. Topologically, residues 337-354 are cytoplasmic; the sequence is VGRSFAMYKNYNIDGNKE. A helical transmembrane segment spans residues 355 to 375; sequence MIAFGMMNILGSFSSCYLTTG. The Extracellular portion of the chain corresponds to 376 to 390; it reads PFSRSAVNYNAGCKT. 2 helical membrane-spanning segments follow: residues 391-411 and 412-432; these read ALSNVVMAVAVAVTLLFLTPL and FFYTPLVVLSSIIIAAMLGLV. At 433-447 the chain is on the extracellular side; that stretch reads DYEAAIHLWKLDKFD. A helical membrane pass occupies residues 448–468; that stretch reads FFVCLSAYLGVVFGTIEIGLI. The Cytoplasmic segment spans residues 469 to 646; sequence LSVGISVMRL…DSPVPEFNNV (178 aa). The 124-residue stretch at 504 to 627 folds into the STAS domain; sequence HYPQAITRSS…LTVAEAVAAC (124 aa).

The protein belongs to the SLC26A/SulP transporter (TC 2.A.53) family. Expressed only in leaves.

Its subcellular location is the membrane. Its function is as follows. H(+)/sulfate cotransporter that may play a role in the regulation of sulfate assimilation. The chain is Sulfate transporter 3.2 (SULTR3;2) from Arabidopsis thaliana (Mouse-ear cress).